The sequence spans 208 residues: Uracil phosphoribosyltransferase (208 aa).

Residues R78, R103, and 130–138 (DPMLATGGS) contribute to the 5-phospho-alpha-D-ribose 1-diphosphate site. Uracil-binding positions include I193 and 198–200 (GDA). A 5-phospho-alpha-D-ribose 1-diphosphate-binding site is contributed by D199.

Belongs to the UPRTase family. Mg(2+) is required as a cofactor.

The catalysed reaction is UMP + diphosphate = 5-phospho-alpha-D-ribose 1-diphosphate + uracil. It functions in the pathway pyrimidine metabolism; UMP biosynthesis via salvage pathway; UMP from uracil: step 1/1. Its activity is regulated as follows. Allosterically activated by GTP. Its function is as follows. Catalyzes the conversion of uracil and 5-phospho-alpha-D-ribose 1-diphosphate (PRPP) to UMP and diphosphate. This is Uracil phosphoribosyltransferase from Shewanella denitrificans (strain OS217 / ATCC BAA-1090 / DSM 15013).